We begin with the raw amino-acid sequence, 325 residues long: Protease HtpX homolog (325 aa).

The helical transmembrane segment at 20–40 (IGYLLGGGGGMMIALVIAVAM) threads the bilayer. Histidine 130 is a binding site for Zn(2+). The active site involves glutamate 131. Histidine 134 contacts Zn(2+). 2 helical membrane passes run 145–165 (IVAT…FLGG) and 173–193 (VMGV…AMIV). Residue glutamate 202 participates in Zn(2+) binding. A disordered region spans residues 286–325 (SAAMTARAAAPSQNSGPWGQRSDNAGGNSNGGSRYRGPWS). Over residues 306 to 325 (RSDNAGGNSNGGSRYRGPWS) the composition is skewed to low complexity.

The protein belongs to the peptidase M48B family. Requires Zn(2+) as cofactor.

It localises to the cell inner membrane. In Brucella melitensis biotype 2 (strain ATCC 23457), this protein is Protease HtpX homolog.